The chain runs to 428 residues: Serine--tRNA ligase (428 aa).

231–233 (TAE) contacts L-serine. 262–264 (RSE) contributes to the ATP binding site. Glutamate 285 contributes to the L-serine binding site. Residue 349–352 (EISS) coordinates ATP. L-serine is bound at residue serine 385.

It belongs to the class-II aminoacyl-tRNA synthetase family. Type-1 seryl-tRNA synthetase subfamily. Homodimer. The tRNA molecule binds across the dimer.

The protein localises to the cytoplasm. It catalyses the reaction tRNA(Ser) + L-serine + ATP = L-seryl-tRNA(Ser) + AMP + diphosphate + H(+). It carries out the reaction tRNA(Sec) + L-serine + ATP = L-seryl-tRNA(Sec) + AMP + diphosphate + H(+). It functions in the pathway aminoacyl-tRNA biosynthesis; selenocysteinyl-tRNA(Sec) biosynthesis; L-seryl-tRNA(Sec) from L-serine and tRNA(Sec): step 1/1. In terms of biological role, catalyzes the attachment of serine to tRNA(Ser). Is also able to aminoacylate tRNA(Sec) with serine, to form the misacylated tRNA L-seryl-tRNA(Sec), which will be further converted into selenocysteinyl-tRNA(Sec). This chain is Serine--tRNA ligase, found in Staphylococcus aureus (strain Mu3 / ATCC 700698).